Here is a 239-residue protein sequence, read N- to C-terminus: EF-hand domain-containing protein D1 (239 aa).

Basic and acidic residues predominate over residues 1-18 (MASEELACKLERRLRREE). A disordered region spans residues 1–53 (MASEELACKLERRLRREEAEESGPQLAPLGAPAPEPKPEPEPPARAPTASADA). EF-hand domains follow at residues 90 to 125 (RLIKDLESMFKLYDAGRDGFIDLMELKLMMEKLGAP) and 126 to 161 (QTHLGLKSMIKEVDEDFDGKLSFREFLLIFHKAAAG). Positions 103, 107, 114, 139, 141, 143, 145, and 150 each coordinate Ca(2+). At Ser201 the chain carries Phosphoserine.

It localises to the mitochondrion inner membrane. Functionally, acts as a calcium sensor for mitochondrial flash (mitoflash) activation, an event characterized by stochastic bursts of superoxide production. May play a role in neuronal differentiation. The sequence is that of EF-hand domain-containing protein D1 (EFHD1) from Homo sapiens (Human).